Consider the following 575-residue polypeptide: Transcription factor E3 (575 aa).

Phosphoserine; by MTOR is present on S47. The span at 90 to 126 (ATLSASSSAGGSRTPAMSSSSSSRVLLRQQLMRAQAQ) shows a compositional bias: low complexity. The disordered stretch occupies residues 90–153 (ATLSASSSAG…SPAPASPAIS (64 aa)). The span at 127–136 (EQERRERREQ) shows a compositional bias: basic and acidic residues. At R188 the chain carries Asymmetric dimethylarginine. The disordered stretch occupies residues 211–246 (LASQALTPPPGPASAQPLPAPEAAHTTGPTGSAPNS). Positions 260 to 271 (EIDDVIDEIISL) are strong transcription activation domain. S321 bears the Phosphoserine; by MTOR mark. Residue K339 forms a Glycyl lysine isopeptide (Lys-Gly) (interchain with G-Cter in SUMO2) linkage. The 54-residue stretch at 346 to 399 (QKKDNHNLIERRRRFNINDRIKELGTLIPKSSDPEMRWNKGTILKASVDYIRKL) folds into the bHLH domain. The Nuclear localization signal motif lies at 356–359 (RRRR). Positions 409-430 (LESRQRSLEQANRSLQLRIQEL) are leucine-zipper. Disordered regions lie at residues 473–498 (GAATFHVGGGPAQNAPHQQPPAPPSD) and 534–575 (GGLS…EEES). Positions 539–575 (GALSPLRAASDPLLSSVSPAVSKASSRRSSFSMEEES) are enriched in low complexity. Phosphoserine occurs at positions 542, 548, 554, 556, 560, and 568.

Belongs to the MiT/TFE family. As to quaternary structure, homodimer and heterodimer; with TFEB or MITF. Interacts with RRAGC/RagC GDP-bound and RRAGD/RagD GDP-bound; promoting its recruitment to lysosomal membrane in the presence of nutrients. Interacts with TSC22D1; the interaction is enhanced in the presence of TGF-beta. Sumoylated; does not affect dimerization with MITF. In terms of processing, phosphorylation ar Ser-47 and Ser-321 by MTOR via non-canonical mTORC1 pathway regulates its stability and subcellular location, respectively. When nutrients are present, phosphorylation by MTOR at Ser-47 promotes ubiquitination by the SCF(BTRC) complex, followed by degradation. When nutrients are present, phosphorylation by MTOR at Ser-321 also promotes association with 14-3-3/YWHA adapters and retention in the cytosol. Phosphorylation at Ser-47 plays a more critical role than phosphorylation at Ser-321 for TFE3 inactivation. Inhibition of mTORC1, starvation and lysosomal disruption, promotes dephosphorylation and transcription factor activity. Post-translationally, ubiquitinated by the SCF(BTRC) and SCF(FBXW11) complexes following phosphorylation at Ser-47 by MTOR, leading to its degradation by the proteasome. Ubiquitous in fetal and adult tissues.

The protein resides in the cytoplasm. It is found in the cytosol. Its subcellular location is the nucleus. The protein localises to the lysosome membrane. Its function is as follows. Transcription factor that acts as a master regulator of lysosomal biogenesis and immune response. Specifically recognizes and binds E-box sequences (5'-CANNTG-3'); efficient DNA-binding requires dimerization with itself or with another MiT/TFE family member such as TFEB or MITF. Involved in the cellular response to amino acid availability by acting downstream of MTOR: in the presence of nutrients, TFE3 phosphorylation by MTOR promotes its inactivation. Upon starvation or lysosomal stress, inhibition of MTOR induces TFE3 dephosphorylation, resulting in transcription factor activity. Specifically recognizes and binds the CLEAR-box sequence (5'-GTCACGTGAC-3') present in the regulatory region of many lysosomal genes, leading to activate their expression, thereby playing a central role in expression of lysosomal genes. Maintains the pluripotent state of embryonic stem cells by promoting the expression of genes such as ESRRB; mTOR-dependent TFE3 cytosolic retention and inactivation promotes exit from pluripotency. Required to maintain the naive pluripotent state of hematopoietic stem cell; mTOR-dependent cytoplasmic retention of TFE3 promotes the exit of hematopoietic stem cell from pluripotency. TFE3 activity is also involved in the inhibition of neuronal progenitor differentiation. Acts as a positive regulator of browning of adipose tissue by promoting expression of target genes; mTOR-dependent phosphorylation promotes cytoplasmic retention of TFE3 and inhibits browning of adipose tissue. In association with TFEB, activates the expression of CD40L in T-cells, thereby playing a role in T-cell-dependent antibody responses in activated CD4(+) T-cells and thymus-dependent humoral immunity. Specifically recognizes the MUE3 box, a subset of E-boxes, present in the immunoglobulin enhancer. It also binds very well to a USF/MLTF site. Promotes TGF-beta-induced transcription of COL1A2; via its interaction with TSC22D1 at E-boxes in the gene proximal promoter. May regulate lysosomal positioning in response to nutrient deprivation by promoting the expression of PIP4P1. The polypeptide is Transcription factor E3 (Homo sapiens (Human)).